The primary structure comprises 239 residues: Ribonuclease HII (239 aa).

An RNase H type-2 domain is found at 18 to 231 (KIIVGLDEAG…SKNLLKEIEE (214 aa)). Residues aspartate 24, glutamate 25, and aspartate 125 each contribute to the a divalent metal cation site.

The protein belongs to the RNase HII family. Requires Mn(2+) as cofactor. It depends on Mg(2+) as a cofactor.

It localises to the cytoplasm. It catalyses the reaction Endonucleolytic cleavage to 5'-phosphomonoester.. Endonuclease that specifically degrades the RNA of RNA-DNA hybrids. The sequence is that of Ribonuclease HII from Methanococcus maripaludis (strain C5 / ATCC BAA-1333).